Here is a 245-residue protein sequence, read N- to C-terminus: DNA repair protein RecO (245 aa).

The protein belongs to the RecO family.

Functionally, involved in DNA repair and RecF pathway recombination. The protein is DNA repair protein RecO of Porphyromonas gingivalis (strain ATCC BAA-308 / W83).